The primary structure comprises 117 residues: Large ribosomal subunit protein bL19 (117 aa).

The protein belongs to the bacterial ribosomal protein bL19 family.

Functionally, this protein is located at the 30S-50S ribosomal subunit interface and may play a role in the structure and function of the aminoacyl-tRNA binding site. This is Large ribosomal subunit protein bL19 from Proteus mirabilis (strain HI4320).